The chain runs to 728 residues: Polyribonucleotide nucleotidyltransferase (728 aa).

Aspartate 513 and aspartate 519 together coordinate Mg(2+). The KH domain maps to 580–640 (PKVKMILIKP…EIVDLTVTYI (61 aa)). Residues 650 to 724 (ENVYEVKILR…ERGQIDLSKK (75 aa)) enclose the S1 motif domain.

This sequence belongs to the polyribonucleotide nucleotidyltransferase family. Mg(2+) serves as cofactor.

Its subcellular location is the cytoplasm. The enzyme catalyses RNA(n+1) + phosphate = RNA(n) + a ribonucleoside 5'-diphosphate. Involved in mRNA degradation. Catalyzes the phosphorolysis of single-stranded polyribonucleotides processively in the 3'- to 5'-direction. The polypeptide is Polyribonucleotide nucleotidyltransferase (Phytoplasma mali (strain AT)).